The following is a 996-amino-acid chain: Sarcoplasmic/endoplasmic reticulum calcium ATPase 1 (996 aa).

The Cytoplasmic segment spans residues 1–48; sequence MENAHTKSPAECLSYFGVNEHTGLSPDQFKKNLDKFGYNELPAEEGKS. The helical transmembrane segment at 49-69 threads the bilayer; sequence IWDLIVEQFEDLLVRILLLAA. Residues 70–89 lie on the Lumenal side of the membrane; it reads CISFVLAWFEEGEETITAFV. A helical transmembrane segment spans residues 90 to 110; the sequence is EPFVILLILIANAIVGVWQER. Residues 111–253 lie on the Cytoplasmic side of the membrane; it reads NAEDAIEALK…QEKTPLQAKL (143 aa). A helical membrane pass occupies residues 254-273; it reads DEFGEQLSKVISLICVAVWA. Over 274–295 the chain is Lumenal; it reads INIGHFNDPVHGGSWIRGAVYY. A helical transmembrane segment spans residues 296-313; it reads FKIAVALAVAAIPEGLPA. Ca(2+) is bound by residues Val304, Ala305, Ile307, and Glu309. Residues 314–754 are Cytoplasmic-facing; it reads VITTCLALGT…EEGRAIYNNM (441 aa). The active-site 4-aspartylphosphate intermediate is Asp351. 2 residues coordinate Mg(2+): Asp351 and Thr353. Thr353, Glu442, Arg489, Lys512, Arg557, Thr622, Gly623, Asp624, Arg675, and Lys681 together coordinate ATP. Residue Asp700 coordinates Mg(2+). Asn703 is an ATP binding site. The helical transmembrane segment at 755-774 threads the bilayer; the sequence is KQFIRYLISSNVGEVVCIFL. Positions 765 and 768 each coordinate Ca(2+). Topologically, residues 775–784 are lumenal; sequence TAALGLPEAL. Residues 785 to 805 traverse the membrane as a helical segment; sequence IPVQLLWVNLVTDGLPATALG. Positions 785-805 are interaction with PLN; sequence IPVQLLWVNLVTDGLPATALG. Positions 793, 796, and 797 each coordinate Ca(2+). The Cytoplasmic segment spans residues 806–825; the sequence is FNPPDLDIMGKPPRSPKEPL. Residues 826–848 traverse the membrane as a helical segment; sequence ISGWLFFRYMAIGGYVGAATVGG. Residues 849-894 are Lumenal-facing; sequence AAWWFLYDSTGPAVTYYQLSHFMQCHNHNEDFTGVDCDIFEASPPM. Cys873 and Cys885 are joined by a disulfide. Residues 895–914 traverse the membrane as a helical segment; the sequence is TMALSVLVTIEMCNALNSLS. A Ca(2+)-binding site is contributed by Glu905. The Cytoplasmic portion of the chain corresponds to 915–927; sequence ENQSLIRMPPWSN. The helical transmembrane segment at 928 to 946 threads the bilayer; it reads LWLMAAMTLSMSLHFMIIY. An interaction with PLN region spans residues 929–940; the sequence is WLMAAMTLSMSL. The Lumenal segment spans residues 947-961; it reads VDPLPMIFKLTHLTF. The helical transmembrane segment at 962 to 982 threads the bilayer; sequence DQWLMVFKLSFPVILIDEVLK. Residues 983–996 lie on the Cytoplasmic side of the membrane; sequence FFARNYIETGKEVK.

This sequence belongs to the cation transport ATPase (P-type) (TC 3.A.3) family. Type IIA subfamily. As to quaternary structure, interacts with sarcolipin (SLN). Interacts with phospholamban (PLN). Interacts with myoregulin (MRLN). Interacts with DWORF. Requires Mg(2+) as cofactor.

It localises to the endoplasmic reticulum membrane. The protein resides in the sarcoplasmic reticulum membrane. The catalysed reaction is Ca(2+)(in) + ATP + H2O = Ca(2+)(out) + ADP + phosphate + H(+). Its activity is regulated as follows. Inhibited by sarcolipin (SLN) and myoregulin (MRLN). Also shown to be inhibited by phospholamban (PLN) in vitro. Enhanced by DWORF; DWORF increases activity by displacing sarcolipin (SLN), phospholamban (PLN) and myoregulin (MRLN). Its function is as follows. Key regulator of striated muscle performance by acting as the major Ca(2+) ATPase responsible for the reuptake of cytosolic Ca(2+) into the sarcoplasmic reticulum. Catalyzes the hydrolysis of ATP coupled with the translocation of calcium from the cytosol to the sarcoplasmic reticulum lumen. Contributes to calcium sequestration involved in muscular excitation/contraction. The sequence is that of Sarcoplasmic/endoplasmic reticulum calcium ATPase 1 (atp2a1) from Makaira nigricans (Atlantic blue marlin).